The chain runs to 430 residues: Serine hydroxymethyltransferase (430 aa).

(6S)-5,6,7,8-tetrahydrofolate is bound by residues leucine 123 and 127-129; that span reads GHL. At lysine 232 the chain carries N6-(pyridoxal phosphate)lysine. (6S)-5,6,7,8-tetrahydrofolate is bound at residue glutamate 248.

It belongs to the SHMT family. As to quaternary structure, homodimer. Pyridoxal 5'-phosphate is required as a cofactor.

It localises to the cytoplasm. The catalysed reaction is (6R)-5,10-methylene-5,6,7,8-tetrahydrofolate + glycine + H2O = (6S)-5,6,7,8-tetrahydrofolate + L-serine. It functions in the pathway one-carbon metabolism; tetrahydrofolate interconversion. The protein operates within amino-acid biosynthesis; glycine biosynthesis; glycine from L-serine: step 1/1. Its function is as follows. Catalyzes the reversible interconversion of serine and glycine with tetrahydrofolate (THF) serving as the one-carbon carrier. This reaction serves as the major source of one-carbon groups required for the biosynthesis of purines, thymidylate, methionine, and other important biomolecules. Also exhibits THF-independent aldolase activity toward beta-hydroxyamino acids, producing glycine and aldehydes, via a retro-aldol mechanism. This is Serine hydroxymethyltransferase from Anaplasma marginale (strain St. Maries).